The following is a 188-amino-acid chain: Inner kinetochore subunit cnl2 (188 aa).

It belongs to the NKP2 family. In terms of assembly, component of the inner kinetochore constitutive centromere-associated network (CCAN) (also known as central kinetochore Sim4 complex in fission yeast), which is composed of at least cnl2, cnp3, cnp20, fta1, fta2, fta3, fta4, fta6, fta7, mal2, mhf1, mhf2, mis6, mis15, mis17, sim4 and wip1.

Its subcellular location is the cytoplasm. It is found in the nucleus. The protein resides in the chromosome. It localises to the centromere. The protein localises to the kinetochore. Its function is as follows. Component of the kinetochore, a multiprotein complex that assembles on centromeric DNA and attaches chromosomes to spindle microtubules, mediating chromosome segregation and sister chromatid segregation during meiosis and mitosis. Component of the inner kinetochore constitutive centromere-associated network (CCAN), which serves as a structural platform for outer kinetochore assembly. This Schizosaccharomyces pombe (strain 972 / ATCC 24843) (Fission yeast) protein is Inner kinetochore subunit cnl2 (cnl2).